Consider the following 411-residue polypeptide: MTNKTWGGRFKKSLDSSVNQFNASLSFDHVLFDQDINGSQVHVKQLAKQKILTEAECQEIYSALEEIRTEIKQGQYSFNERDEEDIHMFIEQLLIQKIGDLGKKLHTGRSRNDQVALDLRLYTRDKGCLINELLTRLIDCLDDLTSKHQQDLMPGYTHLQQAQPVTLGAYFNAYQCMFSRDKSRLEDWFKRMNYSPLGAGALAGSTLPLDREWVAESLGFAGIIPNTLDAVSDRDFVIELCSVAAMIMMHLSRLCEDLILWSTQEFNFVTLDDAFATGSSLMPNKKNPDVPELIRGKSGRVYGHLMAILTVMKGLPLAYNKDMQEDKEGLFDTINTIIVCLQMITPFLQSLTFNTPLMRTKAQSGYLDATAILESLVMKGMPFRDAHHQVGAWIAEAIEKQCSLNELLKGG.

The protein belongs to the lyase 1 family. Argininosuccinate lyase subfamily.

It localises to the cytoplasm. The enzyme catalyses 2-(N(omega)-L-arginino)succinate = fumarate + L-arginine. It functions in the pathway amino-acid biosynthesis; L-arginine biosynthesis; L-arginine from L-ornithine and carbamoyl phosphate: step 3/3. The protein is Argininosuccinate lyase of Legionella pneumophila subsp. pneumophila (strain Philadelphia 1 / ATCC 33152 / DSM 7513).